The primary structure comprises 499 residues: Bifunctional purine biosynthesis protein PurH (499 aa).

In terms of domain architecture, MGS-like spans 1–144 (MIKRALISVF…KNFKDVVVLT (144 aa)).

Belongs to the PurH family.

The enzyme catalyses (6R)-10-formyltetrahydrofolate + 5-amino-1-(5-phospho-beta-D-ribosyl)imidazole-4-carboxamide = 5-formamido-1-(5-phospho-D-ribosyl)imidazole-4-carboxamide + (6S)-5,6,7,8-tetrahydrofolate. It catalyses the reaction IMP + H2O = 5-formamido-1-(5-phospho-D-ribosyl)imidazole-4-carboxamide. The protein operates within purine metabolism; IMP biosynthesis via de novo pathway; 5-formamido-1-(5-phospho-D-ribosyl)imidazole-4-carboxamide from 5-amino-1-(5-phospho-D-ribosyl)imidazole-4-carboxamide (10-formyl THF route): step 1/1. Its pathway is purine metabolism; IMP biosynthesis via de novo pathway; IMP from 5-formamido-1-(5-phospho-D-ribosyl)imidazole-4-carboxamide: step 1/1. The protein is Bifunctional purine biosynthesis protein PurH of Clostridium botulinum (strain Langeland / NCTC 10281 / Type F).